We begin with the raw amino-acid sequence, 803 residues long: MADMSVKQLADLVRTTPERLLEQLKEAGVAITHVDQTISDEEKRKLLLHLKTSHSTETDKKRSKIVLKRKKLSVVKSGKKSVNVEIRSKRTYTKPVVEQKRETEPAPTQEVPLTSDTTNLNEKAEVNVATLEKAVEAEVKEEAKKTPSEKKETPKKGPRKETRRSRKPDKEDKWEREELHMTKLVEERRRRHKPAHMPDSDNASAKLEQGFARPTAPVVREVALPESITVADLAQKMSVKAAEVIKAMMKLGAMVTINQRIDQETAAIVVEEMGHKPKLIKEDVLEENLVATLGEQTGEAVPRAPVVTIMGHVDHGKTSLLDYIRRTKVTSTEAGGITQHIGAYHVETELGMITFLDTPGHEAFTAMRARGAKCTDIVVLVVAADDGIMPQTVEAIQHARAAKVPVVVAVNKIDKPEADPERIKTELSTHDVLPEEWGGDTMFQPISAKTGEGIDALLERILLQAEVLELKAVDNGPARGMVVESRLDRGRGPVATVLVTSGELHLGDILLVGREYGRVRAMIGDDGRPCESAGPSMPVEVLGLSGTPVAGEEAIVVPDERKAREIARFRQGKYREVRLAKKQTAHLERIFDRMGEGKQNTLNIVLKADVQGSLEALTEALNKLSTDEVKVNIIASGVGGITESDVNLAIASDAVVIGFNVRADAPTRVLVEREGVDLRYYSIIYDLIDEVKKALSGLLAPEFEEKIVGLAEVRDVFRSSKIGAIAGCMVVEGVVRRHLPIRVLRDNVVIYEGLLESLRRYKEDVAEVRQGTECGIGVKNYNDVKVGDQIEVYEKTQVHRTIA.

2 disordered regions span residues 95-125 (PVVEQKRETEPAPTQEVPLTSDTTNLNEKAE) and 138-178 (EVKE…EREE). A compositionally biased stretch (polar residues) spans 111-121 (VPLTSDTTNLN). A compositionally biased stretch (basic and acidic residues) spans 138–155 (EVKEEAKKTPSEKKETPK). Basic residues predominate over residues 156 to 167 (KGPRKETRRSRK). Basic and acidic residues predominate over residues 168–178 (PDKEDKWEREE). One can recognise a tr-type G domain in the interval 302-471 (PRAPVVTIMG…LLQAEVLELK (170 aa)). Positions 311–318 (GHVDHGKT) are G1. 311–318 (GHVDHGKT) provides a ligand contact to GTP. The interval 336 to 340 (GITQH) is G2. The tract at residues 357–360 (DTPG) is G3. Residues 357 to 361 (DTPGH) and 411 to 414 (NKID) contribute to the GTP site. Residues 411–414 (NKID) are G4. Residues 447–449 (SAK) form a G5 region.

The protein belongs to the TRAFAC class translation factor GTPase superfamily. Classic translation factor GTPase family. IF-2 subfamily.

The protein resides in the cytoplasm. In terms of biological role, one of the essential components for the initiation of protein synthesis. Protects formylmethionyl-tRNA from spontaneous hydrolysis and promotes its binding to the 30S ribosomal subunits. Also involved in the hydrolysis of GTP during the formation of the 70S ribosomal complex. This chain is Translation initiation factor IF-2, found in Coxiella burnetii (strain Dugway 5J108-111).